The chain runs to 215 residues: Phosphatidylserine decarboxylase proenzyme (215 aa).

Ser-186 functions as the Schiff-base intermediate with substrate; via pyruvic acid in the catalytic mechanism. The residue at position 186 (Ser-186) is a Pyruvic acid (Ser); by autocatalysis.

The protein belongs to the phosphatidylserine decarboxylase family. PSD-A subfamily. Heterodimer of a large membrane-associated beta subunit and a small pyruvoyl-containing alpha subunit. The cofactor is pyruvate. Post-translationally, is synthesized initially as an inactive proenzyme. Formation of the active enzyme involves a self-maturation process in which the active site pyruvoyl group is generated from an internal serine residue via an autocatalytic post-translational modification. Two non-identical subunits are generated from the proenzyme in this reaction, and the pyruvate is formed at the N-terminus of the alpha chain, which is derived from the carboxyl end of the proenzyme. The post-translation cleavage follows an unusual pathway, termed non-hydrolytic serinolysis, in which the side chain hydroxyl group of the serine supplies its oxygen atom to form the C-terminus of the beta chain, while the remainder of the serine residue undergoes an oxidative deamination to produce ammonia and the pyruvoyl prosthetic group on the alpha chain.

It is found in the cell membrane. The catalysed reaction is a 1,2-diacyl-sn-glycero-3-phospho-L-serine + H(+) = a 1,2-diacyl-sn-glycero-3-phosphoethanolamine + CO2. It participates in phospholipid metabolism; phosphatidylethanolamine biosynthesis; phosphatidylethanolamine from CDP-diacylglycerol: step 2/2. Its function is as follows. Catalyzes the formation of phosphatidylethanolamine (PtdEtn) from phosphatidylserine (PtdSer). In Pelagibacter ubique (strain HTCC1062), this protein is Phosphatidylserine decarboxylase proenzyme.